The sequence spans 372 residues: MAPAPPPAASFTPAEVQRRLAAGACWVRRGASLYDLTSFVRHHPGGEQLLLARAGQDISADLDGPPHRHSDNARRWLEQYYVGELRADPQDPTENGAVASAETQKTDPALEPQFKVVDWDKDLVDWQKPLLWQVGHLGEKYDEWVHQPVARPIRLFHSDLIEAFSKTVWYSVPIIWVPLVLYLSWSYYRTLTQDNIRLFASLTREYSMMMPESVFIGLFVLGMLFWTFVEYVIHRFLFHMKPPSNSHYLIMLHFVMHGQHHKAPFDGSRLVFPPVPASLVIAFFYVFLRLILPETVGGIIFAGGLLGYVLYDMTHYYLHFGSPHKGSYLYNMKAHHVKHHFEYQKSGFGISTKLWDYFFHTLIPEEAHPKMQ.

The Cytochrome b5 heme-binding domain maps to 8-86 (AASFTPAEVQ…LEQYYVGELR (79 aa)). The heme site is built by His43 and His69. The next 2 helical transmembrane spans lie at 168–188 (VWYSVPIIWVPLVLYLSWSYY) and 213–233 (SVFIGLFVLGMLFWTFVEYVI). Positions 219 to 361 (FVLGMLFWTF…TKLWDYFFHT (143 aa)) constitute a Fatty acid hydroxylase domain. Zn(2+) is bound by residues His234, His239, His257, His260, and His261. Helical transmembrane passes span 268-288 (SRLVFPPVPASLVIAFFYVFL) and 290-310 (LILPETVGGIIFAGGLLGYVL). The Zn(2+) site is built by His315, His319, His336, His339, and His340.

Belongs to the sterol desaturase family. SCS7 subfamily. The cofactor is Zn(2+). As to expression, expressed in brain (at protein level). Detected in cerebellum and forebrain. Expression in the white matter is mainly restricted in oligodendrocytes. Expressed in stomach, kidney, skin and testis. Expressed in sebaceous gland.

It is found in the endoplasmic reticulum membrane. Its subcellular location is the microsome membrane. The catalysed reaction is a 1,2-saturated fatty acid + 2 Fe(II)-[cytochrome b5] + O2 + 2 H(+) = a (R)-2-hydroxy fatty acid + 2 Fe(III)-[cytochrome b5] + H2O. The enzyme catalyses hexadecanoate + 2 Fe(II)-[cytochrome b5] + O2 + 2 H(+) = (R)-2-hydroxyhexadecanoate + 2 Fe(III)-[cytochrome b5] + H2O. It carries out the reaction octadecanoate + 2 Fe(II)-[cytochrome b5] + O2 + 2 H(+) = (R)-2-hydroxyoctadecanoate + 2 Fe(III)-[cytochrome b5] + H2O. It catalyses the reaction docosanoate + 2 Fe(II)-[cytochrome b5] + O2 + 2 H(+) = 2-hydroxydocosanoate + 2 Fe(III)-[cytochrome b5] + H2O. The catalysed reaction is tetracosanoate + 2 Fe(II)-[cytochrome b5] + O2 + 2 H(+) = (R)-2-hydroxytetracosanoate + 2 Fe(III)-[cytochrome b5] + H2O. The protein operates within sphingolipid metabolism; galactosylceramide biosynthesis. Its pathway is lipid metabolism; fatty acid metabolism. Its function is as follows. Catalyzes the hydroxylation of free fatty acids at the C-2 position to produce 2-hydroxy fatty acids, which are building blocks of sphingolipids and glycosphingolipids common in neural tissue and epidermis. FA2H is stereospecific for the production of (R)-2-hydroxy fatty acids. Plays an essential role in the synthesis of galactosphingolipids of the myelin sheath. Responsible for the synthesis of sphingolipids and glycosphingolipids involved in the formation of epidermal lamellar bodies critical for skin permeability barrier. Participates in the synthesis of glycosphingolipids and a fraction of type II wax diesters in sebaceous gland, specifically regulating hair follicle homeostasis. Involved in the synthesis of sphingolipids of plasma membrane rafts, controlling lipid raft mobility and trafficking of raft-associated proteins. This chain is Fatty acid 2-hydroxylase, found in Mus musculus (Mouse).